Consider the following 388-residue polypeptide: Chorismate synthase (388 aa).

2 residues coordinate NADP(+): arginine 39 and arginine 45. A disordered region spans residues 95-118; sequence EKNEKSRRVSRPRPGHADLVGGMK. FMN is bound by residues 130–132, 251–252, glycine 296, 311–315, and arginine 337; these read RSS, NA, and KPIPT.

This sequence belongs to the chorismate synthase family. As to quaternary structure, homotetramer. It depends on FMNH2 as a cofactor.

It carries out the reaction 5-O-(1-carboxyvinyl)-3-phosphoshikimate = chorismate + phosphate. The protein operates within metabolic intermediate biosynthesis; chorismate biosynthesis; chorismate from D-erythrose 4-phosphate and phosphoenolpyruvate: step 7/7. Its function is as follows. Catalyzes the anti-1,4-elimination of the C-3 phosphate and the C-6 proR hydrogen from 5-enolpyruvylshikimate-3-phosphate (EPSP) to yield chorismate, which is the branch point compound that serves as the starting substrate for the three terminal pathways of aromatic amino acid biosynthesis. This reaction introduces a second double bond into the aromatic ring system. The chain is Chorismate synthase from Listeria monocytogenes serotype 4b (strain F2365).